We begin with the raw amino-acid sequence, 686 residues long: Tripartite terminase subunit 3 (686 aa).

The short motif at 219 to 226 (IPRRHGKT) is the Walker A motif element. A Walker B motif motif is present at residues 314–319 (LLYVDE). The For ATPase activity role is filled by Glu-319. Active-site for nuclease activity residues include Asp-475, Glu-548, and Asp-660.

The protein belongs to the herpesviridae TRM3 protein family. Interacts with the terminase subunits TRM1 and TRM2. Interacts with portal protein.

The protein localises to the host nucleus. In terms of biological role, component of the molecular motor that translocates viral genomic DNA in empty capsid during DNA packaging. Forms a tripartite terminase complex together with TRM1 and TRM2 in the host cytoplasm. Once the complex reaches the host nucleus, it interacts with the capsid portal vertex. This portal forms a ring in which genomic DNA is translocated into the capsid. TRM3 carries an RNase H-like nuclease activity that plays an important role for the cleavage of concatemeric viral DNA into unit length genomes. In Equine herpesvirus 2 (strain 86/87) (EHV-2), this protein is Tripartite terminase subunit 3.